A 593-amino-acid chain; its full sequence is Aspartate--tRNA ligase (593 aa).

Position 181 (Glu181) interacts with L-aspartate. The tract at residues 205-208 (QLYK) is aspartate. Residue Arg227 participates in L-aspartate binding. ATP contacts are provided by residues 227 to 229 (RDE) and Gln236. An L-aspartate-binding site is contributed by His455. Position 489 (Glu489) interacts with ATP. Arg496 contributes to the L-aspartate binding site. ATP is bound at residue 541 to 544 (GLDR).

It belongs to the class-II aminoacyl-tRNA synthetase family. Type 1 subfamily. As to quaternary structure, homodimer.

The protein resides in the cytoplasm. It catalyses the reaction tRNA(Asp) + L-aspartate + ATP = L-aspartyl-tRNA(Asp) + AMP + diphosphate. Catalyzes the attachment of L-aspartate to tRNA(Asp) in a two-step reaction: L-aspartate is first activated by ATP to form Asp-AMP and then transferred to the acceptor end of tRNA(Asp). The chain is Aspartate--tRNA ligase from Ruminiclostridium cellulolyticum (strain ATCC 35319 / DSM 5812 / JCM 6584 / H10) (Clostridium cellulolyticum).